Reading from the N-terminus, the 648-residue chain is 1-deoxy-D-xylulose-5-phosphate synthase 1 (648 aa).

Thiamine diphosphate contacts are provided by residues His-82 and 123–125; that span reads AHS. Asp-154 contributes to the Mg(2+) binding site. Thiamine diphosphate-binding positions include 155–156, Asn-183, Tyr-292, and Glu-374; that span reads GS. A Mg(2+)-binding site is contributed by Asn-183.

It belongs to the transketolase family. DXPS subfamily. In terms of assembly, homodimer. Requires Mg(2+) as cofactor. Thiamine diphosphate is required as a cofactor.

The enzyme catalyses D-glyceraldehyde 3-phosphate + pyruvate + H(+) = 1-deoxy-D-xylulose 5-phosphate + CO2. Its pathway is metabolic intermediate biosynthesis; 1-deoxy-D-xylulose 5-phosphate biosynthesis; 1-deoxy-D-xylulose 5-phosphate from D-glyceraldehyde 3-phosphate and pyruvate: step 1/1. Catalyzes the acyloin condensation reaction between C atoms 2 and 3 of pyruvate and glyceraldehyde 3-phosphate to yield 1-deoxy-D-xylulose-5-phosphate (DXP). This is 1-deoxy-D-xylulose-5-phosphate synthase 1 from Cereibacter sphaeroides (strain ATCC 17023 / DSM 158 / JCM 6121 / CCUG 31486 / LMG 2827 / NBRC 12203 / NCIMB 8253 / ATH 2.4.1.) (Rhodobacter sphaeroides).